A 338-amino-acid chain; its full sequence is Ketol-acid reductoisomerase (NADP(+)) (338 aa).

Positions 1 to 181 (MNVYYDRDCD…GGGRTGIIET (181 aa)) constitute a KARI N-terminal Rossmann domain. Residues 24 to 27 (YGSQ), Arg47, Ser50, Ser52, and 82 to 85 (DEFQ) contribute to the NADP(+) site. His107 is an active-site residue. NADP(+) is bound at residue Gly133. Residues 182–327 (TFKDETETDL…GNLRAMMPWI (146 aa)) enclose the KARI C-terminal knotted domain. Mg(2+) contacts are provided by Asp190, Glu194, Glu226, and Glu230. Position 251 (Ser251) interacts with substrate.

This sequence belongs to the ketol-acid reductoisomerase family. Requires Mg(2+) as cofactor.

It catalyses the reaction (2R)-2,3-dihydroxy-3-methylbutanoate + NADP(+) = (2S)-2-acetolactate + NADPH + H(+). The catalysed reaction is (2R,3R)-2,3-dihydroxy-3-methylpentanoate + NADP(+) = (S)-2-ethyl-2-hydroxy-3-oxobutanoate + NADPH + H(+). Its pathway is amino-acid biosynthesis; L-isoleucine biosynthesis; L-isoleucine from 2-oxobutanoate: step 2/4. It participates in amino-acid biosynthesis; L-valine biosynthesis; L-valine from pyruvate: step 2/4. Its function is as follows. Involved in the biosynthesis of branched-chain amino acids (BCAA). Catalyzes an alkyl-migration followed by a ketol-acid reduction of (S)-2-acetolactate (S2AL) to yield (R)-2,3-dihydroxy-isovalerate. In the isomerase reaction, S2AL is rearranged via a Mg-dependent methyl migration to produce 3-hydroxy-3-methyl-2-ketobutyrate (HMKB). In the reductase reaction, this 2-ketoacid undergoes a metal-dependent reduction by NADPH to yield (R)-2,3-dihydroxy-isovalerate. This Trichlorobacter lovleyi (strain ATCC BAA-1151 / DSM 17278 / SZ) (Geobacter lovleyi) protein is Ketol-acid reductoisomerase (NADP(+)).